We begin with the raw amino-acid sequence, 148 residues long: Transcriptional regulator MraZ (148 aa).

2 consecutive SpoVT-AbrB domains span residues 5–51 and 80–123; these read ATSL…PLPA and AEDV…SMEA.

The protein belongs to the MraZ family. Forms oligomers.

It is found in the cytoplasm. It localises to the nucleoid. In Methylobacillus flagellatus (strain ATCC 51484 / DSM 6875 / VKM B-1610 / KT), this protein is Transcriptional regulator MraZ.